Here is an 88-residue protein sequence, read N- to C-terminus: Small ribosomal subunit protein uS15 (88 aa).

The protein belongs to the universal ribosomal protein uS15 family. Part of the 30S ribosomal subunit. Forms a bridge to the 50S subunit in the 70S ribosome, contacting the 23S rRNA.

One of the primary rRNA binding proteins, it binds directly to 16S rRNA where it helps nucleate assembly of the platform of the 30S subunit by binding and bridging several RNA helices of the 16S rRNA. In terms of biological role, forms an intersubunit bridge (bridge B4) with the 23S rRNA of the 50S subunit in the ribosome. In Mesoplasma florum (strain ATCC 33453 / NBRC 100688 / NCTC 11704 / L1) (Acholeplasma florum), this protein is Small ribosomal subunit protein uS15.